A 245-amino-acid polypeptide reads, in one-letter code: Transcriptional regulatory protein VxrB (245 aa).

One can recognise a Response regulatory domain in the interval 31 to 142; that stretch reads TLLLVEDDKN…ELFARIRAQL (112 aa). Residue aspartate 78 is modified to 4-aspartylphosphate. A DNA-binding region (ompR/PhoB-type) is located at residues 151–245; the sequence is DSKVVTSNLT…LRGVGYKMKA (95 aa).

In terms of processing, phosphorylated by VxrA.

The protein localises to the cytoplasm. In terms of biological role, member of the two-component regulatory system VxrB/VxrA involved in the regulation of diverses processes, including virulence, the type VI secretion system (T6SS) and biofilm formation. VxrB positively regulates the expression of the T6SS, a virulence nanomachine that directly translocates effectors into bacterial or host cells, thereby facilitating colonization by competing with sister cells and intestinal microbiota. In addition, it activates vpsL expression and biofilm formation, and represses motility. May regulate biofilm formation via its regulation of key biofilm regulators and cyclic di-GMP levels. Significantly contributes to both attack and defense via T6SS, while also influencing competition via regulation of biofilm matrix production. Is critical for colonization in the infant mouse model. The chain is Transcriptional regulatory protein VxrB from Vibrio cholerae serotype O1 (strain ATCC 39315 / El Tor Inaba N16961).